A 435-amino-acid chain; its full sequence is 5-methylthioadenosine/S-adenosylhomocysteine deaminase (435 aa).

Zn(2+) contacts are provided by histidine 65 and histidine 67. Substrate-binding residues include glutamate 94, arginine 150, and histidine 189. Residue histidine 216 coordinates Zn(2+). Residues glutamate 219 and aspartate 304 each coordinate substrate. Aspartate 304 is a binding site for Zn(2+).

Belongs to the metallo-dependent hydrolases superfamily. MTA/SAH deaminase family. It depends on Zn(2+) as a cofactor.

The catalysed reaction is S-adenosyl-L-homocysteine + H2O + H(+) = S-inosyl-L-homocysteine + NH4(+). It catalyses the reaction S-methyl-5'-thioadenosine + H2O + H(+) = S-methyl-5'-thioinosine + NH4(+). Functionally, catalyzes the deamination of 5-methylthioadenosine and S-adenosyl-L-homocysteine into 5-methylthioinosine and S-inosyl-L-homocysteine, respectively. Is also able to deaminate adenosine. In Bacillus cytotoxicus (strain DSM 22905 / CIP 110041 / 391-98 / NVH 391-98), this protein is 5-methylthioadenosine/S-adenosylhomocysteine deaminase.